Here is a 3256-residue protein sequence, read N- to C-terminus: Proliferation marker protein Ki-67 (3256 aa).

The FHA domain occupies 27-76 (CLFGRGIECDIRIQLPVVSKQHCKIEIHEQEAILHNFSSTNPTQVNGSVI). Residues 101-199 (SLQNGRKSTE…RNGRNAADPI (99 aa)) are disordered. The segment covering 107 to 122 (KSTEFPRKIREQEPAR) has biased composition (basic and acidic residues). Ser125, Ser128, and Ser166 each carry phosphoserine. Positions 161–173 (NVKEDSTADDSKD) are enriched in basic and acidic residues. Residues 174–183 (SVAQGTTNVH) show a composition bias toward polar residues. Lys245 participates in a covalent cross-link: Glycyl lysine isopeptide (Lys-Gly) (interchain with G-Cter in SUMO2). Ser264, Ser296, and Ser308 each carry phosphoserine. 2 disordered regions span residues 271–426 (ATEK…RGSI) and 513–542 (RPELFDENLPPNTPLKRGEAPTKRKSLVMH). Over residues 314–324 (DQNKGKGRDVE) the composition is skewed to basic and acidic residues. Thr328 and Thr347 each carry phosphothreonine. Residues 349–358 (VQYSQQQNSP) show a composition bias toward polar residues. Phosphoserine is present on residues Ser352, Ser357, and Ser374. The residue at position 401 (Thr401) is a Phosphothreonine. Ser411 carries the post-translational modification Phosphoserine. Residues 414 to 425 (KPENLSSKTRGS) are compositionally biased toward polar residues. The positively charged patch (CP) stretch occupies residues 495–678 (ESEGIPLKRR…AKQTQTKVIK (184 aa)). The PP1-binding domain maps to 502–549 (KRRRVSFGGHLRPELFDENLPPNTPLKRGEAPTKRKSLVMHTPPVLKK). At Ser538 the chain carries Phosphoserine. Thr543 carries the phosphothreonine modification. The disordered stretch occupies residues 575–632 (SLVISPPAPSPRKTPVASDQRRRSCKTAPASSSKSQTEVPKRGGRKSGNLPSKRVSIS). A phosphoserine mark is found at Ser579 and Ser584. The span at 603-612 (PASSSKSQTE) shows a compositional bias: polar residues. Position 648 is a phosphoserine (Ser648). The tract at residues 674–707 (TKVIKHGPQRSMNKRQRRPATPKKPVGEVHSQFS) is disordered. Basic residues predominate over residues 676-694 (VIKHGPQRSMNKRQRRPAT). Position 761 is a phosphothreonine (Thr761). The segment at 853-886 (SLETKTSDTETEPSKTVSTANRSGRSTEFRNIQK) is disordered. Ser859 is subject to Phosphoserine. Residues 866–882 (SKTVSTANRSGRSTEFR) show a composition bias toward polar residues. Residues 1000–2928 (GKITKMPCQS…ASFQELSQTP (1929 aa)) form a 16 X 122 AA approximate repeats region. K167R repeat units follow at residues 1001-1112 (KITK…FQTP), 1123-1234 (KTTK…FQTP), 1245-1356 (KTTK…FQTP), 1367-1477 (KTTK…FQTP), 1488-1597 (KTTK…LFQT), and 1609-1720 (KTAK…FQTP). Phosphothreonine is present on Thr1017. Residues Lys1022 and Lys1035 each participate in a glycyl lysine isopeptide (Lys-Gly) (interchain with G-Cter in SUMO2) cross-link. The interval 1045-1073 (TRTSGETTHTHREPAGDGKSIRTFKESPK) is disordered. The span at 1052–1072 (THTHREPAGDGKSIRTFKESP) shows a compositional bias: basic and acidic residues. Ser1071 carries the post-translational modification Phosphoserine. The residue at position 1091 (Thr1091) is a Phosphothreonine. Lys1093 participates in a covalent cross-link: Glycyl lysine isopeptide (Lys-Gly) (interchain with G-Cter in SUMO1); alternate. Lys1093 participates in a covalent cross-link: Glycyl lysine isopeptide (Lys-Gly) (interchain with G-Cter in SUMO2); alternate. Ser1098 is subject to Phosphoserine. A disordered region spans residues 1109–1151 (FQTPGPSEESMTDEKTTKIACKSPPPESVDTPTSTKQWPKRSL). Thr1111 is modified (phosphothreonine). Phosphoserine is present on Ser1131. Position 1139 is a phosphothreonine (Thr1139). A Phosphoserine modification is found at Ser1142. Thr1167 carries the post-translational modification Phosphothreonine. Ser1169 bears the Phosphoserine mark. Residue Thr1176 is modified to Phosphothreonine. Glycyl lysine isopeptide (Lys-Gly) (interchain with G-Cter in SUMO2) cross-links involve residues Lys1185 and Lys1188. At Thr1193 the chain carries Phosphothreonine. Ser1207 is subject to Phosphoserine. Thr1233 is modified (phosphothreonine). The interval 1246–1276 (TTKIPCDSPQSDPVDTPTSTKQRPKRSIRKA) is disordered. Phosphoserine occurs at positions 1253 and 1256. Residues 1253 to 1266 (SPQSDPVDTPTSTK) show a composition bias toward polar residues. 4 positions are modified to phosphothreonine: Thr1261, Thr1298, Thr1315, and Thr1327. The disordered stretch occupies residues 1323 to 1518 (TENLTGSKRR…PQSKRSLRKV (196 aa)). Ser1329 carries the phosphoserine modification. Phosphothreonine is present on Thr1335. Lys1337 is covalently cross-linked (Glycyl lysine isopeptide (Lys-Gly) (interchain with G-Cter in SUMO2)). Position 1355 is a phosphothreonine (Thr1355). Phosphoserine is present on Ser1376. Thr1383 carries the phosphothreonine modification. Ser1386 is modified (phosphoserine). 2 stretches are compositionally biased toward basic and acidic residues: residues 1394–1406 (PLEKRDVQKELSA) and 1418–1442 (THTDKVPGGEDKSINAFRETAKQKL). 2 positions are modified to phosphothreonine: Thr1420 and Thr1437. At Ser1496 the chain carries Phosphoserine. At Thr1503 the chain carries Phosphothreonine. At Ser1506 the chain carries Phosphoserine. A Phosphothreonine modification is found at Thr1540. Tyr1552 is subject to Phosphotyrosine. Phosphothreonine is present on residues Thr1557 and Thr1569. 2 positions are modified to phosphoserine: Ser1571 and Ser1617. The tract at residues 1597 to 1675 (TRGHTEESMT…PTGDGKSMKA (79 aa)) is disordered. Position 1639 is an N6-acetyllysine (Lys1639). Residue Lys1643 forms a Glycyl lysine isopeptide (Lys-Gly) (interchain with G-Cter in SUMO2) linkage. The segment covering 1660 to 1672 (THTHTEPTGDGKS) has biased composition (basic and acidic residues). 2 positions are modified to phosphoserine: Ser1679 and Ser1689. 5 disordered regions span residues 1689 to 1708 (SLTGSKRQLRTPKGKSEVPE), 1717 to 1765 (FQTP…ADTE), 1771 to 1790 (FRKQTPSAGKAMHTPKPAVG), 1801 to 1824 (TPVQKLDQPGNLPGSNRRLQTRKE), and 1839 to 1886 (FQTP…KADV). Lys1703 is covalently cross-linked (Glycyl lysine isopeptide (Lys-Gly) (interchain with G-Cter in SUMO2)). Thr1719 is modified (phosphothreonine). Ser1721 carries the phosphoserine modification. Over residues 1722–1733 (HTKESMTNEKTT) the composition is skewed to basic and acidic residues. K167R repeat units lie at residues 1731–1842 (KTTK…FQTP), 1854–1964 (TKKI…FQTP), 1975–2086 (KITE…FQTP), 2097–2204 (KTTK…FQTP), and 2215–2326 (KTTK…FQTP). Ser1740 carries the phosphoserine modification. Thr1747, Thr1764, Thr1784, and Thr1801 each carry phosphothreonine. Ser1815 is subject to Phosphoserine. Phosphothreonine is present on Thr1841. A phosphoserine mark is found at Ser1861 and Ser1864. Residues 1861–1874 (SPQSDPADTPTNTK) are compositionally biased toward polar residues. A phosphothreonine mark is found at Thr1869, Thr1897, Thr1906, and Thr1923. Ser1937 is modified (phosphoserine). Residues 1961 to 2002 (FQTPGHTEESMTDDKITEVSCKSPQPDPVKTPTSSKQRLKIS) form a disordered region. Thr1963 carries the post-translational modification Phosphothreonine. The span at 1966–1977 (HTEESMTDDKIT) shows a compositional bias: basic and acidic residues. Ser1983 bears the Phosphoserine mark. Lys2005 is subject to N6-acetyllysine. A Glycyl lysine isopeptide (Lys-Gly) (interchain with G-Cter in SUMO1); alternate cross-link involves residue Lys2009. A Glycyl lysine isopeptide (Lys-Gly) (interchain with G-Cter in SUMO2); alternate cross-link involves residue Lys2009. The interval 2017–2192 (KLTQTSGKTT…TPKGKAQPLE (176 aa)) is disordered. Residues Thr2028 and Thr2065 each carry the phosphothreonine modification. Basic and acidic residues-rich tracts occupy residues 2028 to 2046 (THRETAGDGKSIKAFKESA) and 2061 to 2070 (RWPRTPKEEA). Residue Lys2067 forms a Glycyl lysine isopeptide (Lys-Gly) (interchain with G-Cter in SUMO1); alternate linkage. Residue Lys2067 forms a Glycyl lysine isopeptide (Lys-Gly) (interchain with G-Cter in SUMO2); alternate linkage. Ser2072 is modified (phosphoserine). Thr2085 bears the Phosphothreonine mark. Over residues 2087–2099 (DHTEESTTDDKTT) the composition is skewed to basic and acidic residues. Residue Ser2105 is modified to Phosphoserine. Phosphothreonine is present on Thr2113. Phosphoserine is present on residues Ser2116 and Ser2135. Positions 2145–2168 (HTDKVPGDEDKGINVFRETAKQKL) are enriched in basic and acidic residues. Phosphothreonine is present on residues Thr2146, Thr2163, and Thr2203. The segment at 2205–2400 (ICTDKPTTHE…KPAVSDEKNI (196 aa)) is disordered. Residue Ser2223 is modified to Phosphoserine. 2 positions are modified to phosphothreonine: Thr2231 and Thr2233. Position 2239 is a phosphoserine (Ser2239). Phosphothreonine is present on Thr2259. Ser2261 is modified (phosphoserine). Phosphothreonine occurs at positions 2268, 2285, 2325, 2328, and 2333. 5 K167R repeats span residues 2336 to 2447 (KTTK…FQTP), 2458 to 2569 (KITE…FSAP), 2580 to 2688 (KNTK…LSET), 2700 to 2805 (KATK…GFKD), and 2819 to 2928 (KTTK…SQTP). Position 2344 is a phosphoserine (Ser2344). Phosphothreonine occurs at positions 2352 and 2389. Ser2395 carries the post-translational modification Phosphoserine. Residue Thr2406 is modified to Phosphothreonine. Residue Ser2420 is modified to Phosphoserine. Thr2426 and Thr2446 each carry phosphothreonine. The disordered stretch occupies residues 2445-2480 (QTPGHTEESMTDDKITEVSCKSPQPESFKTSRSSKQ). A compositionally biased stretch (basic and acidic residues) spans 2449–2460 (HTEESMTDDKIT). Residues 2463–2475 (SCKSPQPESFKTS) are compositionally biased toward polar residues. The residue at position 2466 (Ser2466) is a Phosphoserine. Residue Lys2492 forms a Glycyl lysine isopeptide (Lys-Gly) (interchain with G-Cter in SUMO1) linkage. Residues 2497 to 2521 (AVSKLTRTSGETTQTHTEPTGDSKS) are disordered. Residues 2501 to 2514 (LTRTSGETTQTHTE) are compositionally biased toward polar residues. Phosphoserine occurs at positions 2505, 2528, and 2588. Residues 2570-3256 (GHTEESMTID…TRSHRDSEDI (687 aa)) are disordered. Basic and acidic residues-rich tracts occupy residues 2609 to 2618 (RKEVKEELSA), 2632 to 2644 (THKEPASGDEGIK), and 2660 to 2675 (EPSRRRPRAPKEKAQP). A Glycyl lysine isopeptide (Lys-Gly) (interchain with G-Cter in SUMO1); alternate cross-link involves residue Lys2613. Lys2613 participates in a covalent cross-link: Glycyl lysine isopeptide (Lys-Gly) (interchain with G-Cter in SUMO2); alternate. Position 2638 is a phosphoserine (Ser2638). Polar residues predominate over residues 2685-2696 (LSETSGHTQESL). Ser2708 is modified (phosphoserine). A Glycyl lysine isopeptide (Lys-Gly) (interchain with G-Cter in SUMO1); alternate cross-link involves residue Lys2734. Lys2734 is covalently cross-linked (Glycyl lysine isopeptide (Lys-Gly) (interchain with G-Cter in SUMO2); alternate). 2 stretches are compositionally biased toward basic and acidic residues: residues 2751 to 2770 (DADKEPAGEDKGIKALKESA) and 2810 to 2821 (HTEESMTDDKTT). Phosphoserine occurs at positions 2827, 2828, and 2838. Residue Lys2852 forms a Glycyl lysine isopeptide (Lys-Gly) (interchain with G-Cter in SUMO1); alternate linkage. A Glycyl lysine isopeptide (Lys-Gly) (interchain with G-Cter in SUMO2); alternate cross-link involves residue Lys2852. The span at 2869 to 2881 (THTDKEPVGEGKG) shows a compositional bias: basic and acidic residues. Residues 2941–2951 (SFTSAPKQTPD) are compositionally biased toward polar residues. Residue Lys2967 forms a Glycyl lysine isopeptide (Lys-Gly) (interchain with G-Cter in SUMO2) linkage. Positions 2982-2991 (KSQSKSNTSL) are enriched in polar residues. Lys2986 carries the post-translational modification N6-acetyllysine. Residues 3029 to 3039 (KKQRVAPRARG) are compositionally biased toward basic residues. Residue 3034 to 3041 (APRARGKS) participates in ATP binding. Phosphoserine is present on Ser3041. 2 stretches are compositionally biased toward basic and acidic residues: residues 3071–3080 (KTNKEEHKLQ) and 3113–3124 (ERIEINRNEKKP). Ser3128 carries the post-translational modification Phosphoserine. The span at 3138–3154 (DGARKPIPRDKVTENKR) shows a compositional bias: basic and acidic residues. Over residues 3207-3223 (SQPAASTLESKSVQRVT) the composition is skewed to polar residues. Residues 3228–3241 (RCAENPKKAEDNVC) show a composition bias toward basic and acidic residues.

As to quaternary structure, interacts with KIF15. Interacts (via the FHA domain) with NIFK. Interacts with PPP1CC. Component of a complex at least composed of ZNF335, HCFC1, CCAR2, EMSY, MKI67, RBBP5, ASH2L and WDR5; the complex is formed as a result of interactions between components of a nuclear receptor-mediated transcription complex and a histone methylation complex. Interacts with ZNF335. Hyperphosphorylated by CDK1 in mitosis; hyperphosphorylatiom prevents undergoing liquid-liquid phase separation. Dephosphorylated by PPP1CC at the onset of anaphase. Dephosphorylated by protein phosphatase 2A (PP2A) at the onset of anaphase. Dephosphorylation by protein phosphatase 2A (PP2A) and simultaneous exposure of the positively charged patch (CP) during mitotic exit induce the RNA-dependent formation of a liquid-like condensed phase on the chromosome surface. Post-translationally, ubiquitinated by the APC/C complex after neuronal progenitors exit mitosis during brain development, leading to clearance from constitutive heterochromatin.

The protein localises to the chromosome. It localises to the nucleus. Its subcellular location is the nucleolus. Protein that associates with the surface of mitotic chromosomes and acts both as a chromosome repellent during early mitosis and chromosome attractant during late mitosis. Required to maintain individual mitotic chromosomes dispersed in the cytoplasm following nuclear envelope disassembly. During early mitosis, relocalizes from nucleoli to the chromosome surface where it forms extended brush structures that cover a substantial fraction of the chromosome surface. The MKI67 brush structure prevents chromosomes from collapsing into a single chromatin mass by forming a steric and electrostatic charge barrier: the protein has a high net electrical charge and acts as a surfactant, dispersing chromosomes and enabling independent chromosome motility. During mitotic anaphase, the MKI67 brush structure collapses and MKI67 switches from a chromosome repellent to a chromosome attractant to promote chromosome clustering and facilitate the exclusion of large cytoplasmic particles from the future nuclear space. Mechanistically, dephosphorylation during mitotic exit and simultaneous exposure of a conserved basic patch induce the RNA-dependent formation of a liquid-like condensed phase on the chromosome surface, promoting coalescence of neighboring chromosome surfaces and clustering of chromosomes. Binds premature ribosomal RNAs during anaphase; promoting liquid-liquid phase separation. Binds DNA, with a preference for supercoiled DNA and AT-rich DNA. Does not contribute to the internal structure of mitotic chromosomes. May play a role in chromatin organization; it is however unclear whether it plays a direct role in chromatin organization or whether it is an indirect consequence of its function in mitotic chromosome. The sequence is that of Proliferation marker protein Ki-67 from Homo sapiens (Human).